The primary structure comprises 240 residues: Glyceraldehyde 3-phosphate phosphatase (240 aa).

The protein belongs to the HAD-like hydrolase superfamily. Requires Mg(2+) as cofactor.

Functionally, catalyzes the dephosphorylation of D,L-glyceraldehyde 3-phosphate in vitro. The sequence is that of Glyceraldehyde 3-phosphate phosphatase from Pyrococcus furiosus (strain ATCC 43587 / DSM 3638 / JCM 8422 / Vc1).